The primary structure comprises 375 residues: Lipid-A-disaccharide synthase (375 aa).

It belongs to the LpxB family.

It carries out the reaction a lipid X + a UDP-2-N,3-O-bis[(3R)-3-hydroxyacyl]-alpha-D-glucosamine = a lipid A disaccharide + UDP + H(+). Its pathway is bacterial outer membrane biogenesis; LPS lipid A biosynthesis. Its function is as follows. Condensation of UDP-2,3-diacylglucosamine and 2,3-diacylglucosamine-1-phosphate to form lipid A disaccharide, a precursor of lipid A, a phosphorylated glycolipid that anchors the lipopolysaccharide to the outer membrane of the cell. The protein is Lipid-A-disaccharide synthase of Pseudomonas putida (strain W619).